The chain runs to 179 residues: Guanosine-3',5'-bis(diphosphate) 3'-pyrophosphohydrolase MESH1 (179 aa).

Residue Gly-2 is modified to N-acetylglycine. Lys-25 bears the N6-acetyllysine mark. An HD domain is found at 32–127 (YINHPIGVAR…VKLADKLYNL (96 aa)). Residues His-35, His-61, and Asp-62 each contribute to the Mn(2+) site. Catalysis depends on nucleophile residues Glu-65 and Asp-66. Lys-97 carries the N6-acetyllysine modification. Asp-122 lines the Mn(2+) pocket. Residue Lys-123 is modified to N6-acetyllysine.

This sequence belongs to the MESH1 family. Mn(2+) serves as cofactor.

It carries out the reaction guanosine 3',5'-bis(diphosphate) + H2O = GDP + diphosphate + H(+). PpGpp hydrolyzing enzyme involved in starvation response. In Homo sapiens (Human), this protein is Guanosine-3',5'-bis(diphosphate) 3'-pyrophosphohydrolase MESH1 (HDDC3).